The sequence spans 235 residues: Adenosine 5'-phosphosulfate reductase (235 aa).

The [4Fe-4S] cluster site is built by Cys-121, Cys-122, Cys-204, and Cys-207. The active-site Nucleophile; cysteine thiosulfonate intermediate is the Cys-230.

The protein belongs to the PAPS reductase family. CysH subfamily. [4Fe-4S] cluster is required as a cofactor.

It localises to the cytoplasm. It carries out the reaction [thioredoxin]-disulfide + sulfite + AMP + 2 H(+) = adenosine 5'-phosphosulfate + [thioredoxin]-dithiol. It participates in sulfur metabolism; hydrogen sulfide biosynthesis; sulfite from sulfate. In terms of biological role, catalyzes the formation of sulfite from adenosine 5'-phosphosulfate (APS) using thioredoxin as an electron donor. This is Adenosine 5'-phosphosulfate reductase from Geobacillus thermodenitrificans (strain NG80-2).